The following is a 237-amino-acid chain: Ribonuclease PH (237 aa).

Phosphate-binding positions include arginine 86 and 124-126; that span reads GTR.

This sequence belongs to the RNase PH family. In terms of assembly, homohexameric ring arranged as a trimer of dimers.

The catalysed reaction is tRNA(n+1) + phosphate = tRNA(n) + a ribonucleoside 5'-diphosphate. In terms of biological role, phosphorolytic 3'-5' exoribonuclease that plays an important role in tRNA 3'-end maturation. Removes nucleotide residues following the 3'-CCA terminus of tRNAs; can also add nucleotides to the ends of RNA molecules by using nucleoside diphosphates as substrates, but this may not be physiologically important. Probably plays a role in initiation of 16S rRNA degradation (leading to ribosome degradation) during starvation. The chain is Ribonuclease PH from Pseudoalteromonas translucida (strain TAC 125).